A 574-amino-acid chain; its full sequence is Phosphate permease PHO89 (574 aa).

The Extracellular portion of the chain corresponds to 1–5; sequence MALHQ. The chain crosses the membrane as a helical span at residues 6–26; it reads FDYIFAIAMLFAFLDAFNIGA. At 27–43 the chain is on the cytoplasmic side; it reads NDVANSFASSISSRSLK. The helical transmembrane segment at 44 to 64 threads the bilayer; sequence YWQAMVLAGLCEFLGAVLAGA. Residues 65 to 84 are Extracellular-facing; the sequence is RVSGTIKNNIIDSSIFTNDP. A helical transmembrane segment spans residues 85–105; it reads AVLMLTMTSALIGSSCWLTFA. Topologically, residues 106–117 are cytoplasmic; sequence TAIGMPVSTTHS. A helical membrane pass occupies residues 118–138; it reads IVGGTIGAGIAAGGANGVVWG. Residues 139–145 lie on the Extracellular side of the membrane; sequence WSGVSQI. The helical transmembrane segment at 146–166 threads the bilayer; the sequence is IASWFIAPILAGAIAAIVFSI. Residues 167–184 lie on the Cytoplasmic side of the membrane; it reads SRFSVLEVKSLERSIKNA. The chain crosses the membrane as a helical span at residues 185-205; that stretch reads LLLVGVLVFATFSILTMLIVW. Residues 206 to 222 are Extracellular-facing; sequence KGSPNLHLDDLSETETA. Residues 223–243 form a helical membrane-spanning segment; that stretch reads VSIVLTGAIASIVYFIFFYPF. Residues 244-354 lie on the Cytoplasmic side of the membrane; the sequence is YRRKVLDQDW…SLLKQGPKKW (111 aa). Residues 301-332 are disordered; that stretch reads EDEENKAASNSNDSVKNKEDIQEVDLVRTETE. Basic and acidic residues predominate over residues 315 to 332; the sequence is VKNKEDIQEVDLVRTETE. The chain crosses the membrane as a helical span at residues 355 to 375; sequence PLLFWLVISHGWTQDVIHAQV. At 376–398 the chain is on the extracellular side; that stretch reads NDRDMLSGDLKGMYERSKFYDNR. The helical transmembrane segment at 399–419 threads the bilayer; the sequence is VEYIYSVLQAITAATMSFAHG. The Cytoplasmic portion of the chain corresponds to 420–447; sequence ANDVANATGPLSAVYVIWKTNTIGAKSE. The helical transmembrane segment at 448-468 threads the bilayer; sequence VPVWVLAYGGVALVIGCWTYG. At 469–503 the chain is on the extracellular side; sequence YNIIKNLGNKMILQSPSRGFSIELAVAITTVMATQ. A helical transmembrane segment spans residues 504 to 524; sequence LGIPTSTTQIAVGGIVAVGLC. Residues 525–541 lie on the Cytoplasmic side of the membrane; the sequence is NKDLKSVNWRMVAWCYS. A helical transmembrane segment spans residues 542–562; it reads GWFLTLPIAGLIAGIINGIIL. Residues 563 to 574 are Extracellular-facing; that stretch reads NAPRFGVEYQMT.

This sequence belongs to the inorganic phosphate transporter (PiT) (TC 2.A.20) family. Forms homodimers and higher order homooligomers.

Its subcellular location is the cell membrane. It catalyses the reaction 2 Na(+)(out) + phosphate(out) = 2 Na(+)(in) + phosphate(in). With respect to regulation, weakly stimulated by Li(+) and K(+). Inhibited by monensin. Inhibited by phosphonoacetic acid. Inhibited by methylphosphonate. Inhibited by dimethylphosphonate. Its function is as follows. Sodium-phosphate symporter. Active in early growth phase. The protein is Phosphate permease PHO89 (PHO89) of Saccharomyces cerevisiae (strain ATCC 204508 / S288c) (Baker's yeast).